The primary structure comprises 192 residues: MFEYLKGIVTKIDPAYIVLDVNGVGYKILCPTPYSYDENQPATIYVEQVVRDTGITLYGFLSLEDKELFLKLLSVSGIGPKSAVAIMAAEDTDSLASAIQNGEVKYLTRFPGVGKKTASQIVLDLKGKLGDYVKKSTAAADLTPSLQDALLALVALGYTQKEVDRITPKLAKLPENTADGYVKEALALLLKK.

Positions 1–61 (MFEYLKGIVT…DTGITLYGFL (61 aa)) are domain I. Residues 62–137 (SLEDKELFLK…KLGDYVKKST (76 aa)) form a domain II region. The flexible linker stretch occupies residues 137–140 (TAAA). A domain III region spans residues 141–192 (DLTPSLQDALLALVALGYTQKEVDRITPKLAKLPENTADGYVKEALALLLKK).

This sequence belongs to the RuvA family. Homotetramer. Forms an RuvA(8)-RuvB(12)-Holliday junction (HJ) complex. HJ DNA is sandwiched between 2 RuvA tetramers; dsDNA enters through RuvA and exits via RuvB. An RuvB hexamer assembles on each DNA strand where it exits the tetramer. Each RuvB hexamer is contacted by two RuvA subunits (via domain III) on 2 adjacent RuvB subunits; this complex drives branch migration. In the full resolvosome a probable DNA-RuvA(4)-RuvB(12)-RuvC(2) complex forms which resolves the HJ.

The protein resides in the cytoplasm. In terms of biological role, the RuvA-RuvB-RuvC complex processes Holliday junction (HJ) DNA during genetic recombination and DNA repair, while the RuvA-RuvB complex plays an important role in the rescue of blocked DNA replication forks via replication fork reversal (RFR). RuvA specifically binds to HJ cruciform DNA, conferring on it an open structure. The RuvB hexamer acts as an ATP-dependent pump, pulling dsDNA into and through the RuvAB complex. HJ branch migration allows RuvC to scan DNA until it finds its consensus sequence, where it cleaves and resolves the cruciform DNA. The chain is Holliday junction branch migration complex subunit RuvA from Lactobacillus johnsonii (strain CNCM I-12250 / La1 / NCC 533).